A 120-amino-acid polypeptide reads, in one-letter code: SPbeta prophage-derived DSR anti-defense 1 (120 aa).

This sequence belongs to the DSR anti-defense 1 family. Interacts with Bacillus subtilis DSR2 (via C-terminus) in a 2:4 ratio; this interaction leads to the absence of activation of the NADase defense activity of DSR2.

Functionally, counteracts the defense-associated sirtuin 2 (DSR2) defense system of the host. Inhibits the NADase activity of host DSR2 by competing with the tail tube protein that normally activates DSR2. In Bacillus subtilis (strain 168), this protein is SPbeta prophage-derived DSR anti-defense 1 (yotI).